A 356-amino-acid chain; its full sequence is L-Lys-D/L-Arg epimerase (356 aa).

Substrate-binding positions include T135 and 160 to 162 (KVK). The Mg(2+) site is built by D190, E216, and D241. Substrate-binding positions include K266, D296, and 319-321 (DLD).

It belongs to the mandelate racemase/muconate lactonizing enzyme family. It depends on Mg(2+) as a cofactor.

Its function is as follows. Catalyzes the epimerization of L-Lys-L-Arg to L-Lys-D-Arg. Can also catalyze the epimerization of other cationic dipeptides, such as L-Arg-L-Arg, L-Lys-L-Lys and L-Lys-L-His, but with lower efficiency (in vitro). This Methylococcus capsulatus (strain ATCC 33009 / NCIMB 11132 / Bath) protein is L-Lys-D/L-Arg epimerase.